The following is a 629-amino-acid chain: tRNA uridine 5-carboxymethylaminomethyl modification enzyme MnmG (629 aa).

FAD contacts are provided by residues Gly15–Gly20, Val127, and Ser182. The segment at Thr203–Arg227 is disordered. Positions Ser215–Arg227 are enriched in basic and acidic residues. Gly274–Phe288 serves as a coordination point for NAD(+). Gln371 provides a ligand contact to FAD.

This sequence belongs to the MnmG family. As to quaternary structure, homodimer. Heterotetramer of two MnmE and two MnmG subunits. It depends on FAD as a cofactor.

Its subcellular location is the cytoplasm. Functionally, NAD-binding protein involved in the addition of a carboxymethylaminomethyl (cmnm) group at the wobble position (U34) of certain tRNAs, forming tRNA-cmnm(5)s(2)U34. In Listeria welshimeri serovar 6b (strain ATCC 35897 / DSM 20650 / CCUG 15529 / CIP 8149 / NCTC 11857 / SLCC 5334 / V8), this protein is tRNA uridine 5-carboxymethylaminomethyl modification enzyme MnmG.